Here is a 139-residue protein sequence, read N- to C-terminus: Histone H2B (139 aa).

Low complexity predominate over residues 1-37 (MAPKSVASKAPASQASKAPAAASKAPAKAAKTSAAPK). Residues 1-48 (MAPKSVASKAPASQASKAPAAASKAPAKAAKTSAAPKDGAKKRSKKRV) form a disordered region. The residue at position 9 (lysine 9) is an N6-acetyllysine; alternate. A Glycyl lysine isopeptide (Lys-Gly) (interchain with G-Cter in SUMO); alternate cross-link involves residue lysine 9. At serine 13 the chain carries Phosphoserine. Lysine 17 carries the N6-acetyllysine modification. A Glycyl lysine isopeptide (Lys-Gly) (interchain with G-Cter in ubiquitin) cross-link involves residue lysine 134.

This sequence belongs to the histone H2B family. As to quaternary structure, the nucleosome is a histone octamer containing two molecules each of H2A, H2B, H3 and H4 assembled in one H3-H4 heterotetramer and two H2A-H2B heterodimers. The octamer wraps approximately 147 bp of DNA. Monoubiquitinated by the UBC2-BRE1 complex to form H2BK123ub1. H2BK123ub1 gives a specific tag for epigenetic transcriptional activation and is also prerequisite for H3K4me and H3K79me formation. H2BK123ub1 also modulates the formation of double-strand breaks during meiosis and is a prerequisite for DNA-damage checkpoint activation. Post-translationally, phosphorylated to form H2BS10ph during progression through meiotic prophase. May be correlated with chromosome condensation. In terms of processing, acetylation of N-terminal lysines and particularly formation of H2BK11ac has a positive effect on transcription. Sumoylation to form H2BK6su occurs preferentially near the telomeres and represses gene transcription.

The protein localises to the nucleus. Its subcellular location is the chromosome. Core component of nucleosome. Nucleosomes wrap and compact DNA into chromatin, limiting DNA accessibility to the cellular machineries which require DNA as a template. Histones thereby play a central role in transcription regulation, DNA repair, DNA replication and chromosomal stability. DNA accessibility is regulated via a complex set of post-translational modifications of histones, also called histone code, and nucleosome remodeling. The chain is Histone H2B (HTB1) from Cryptococcus neoformans var. neoformans serotype D (strain B-3501A) (Filobasidiella neoformans).